Consider the following 468-residue polypeptide: MLTVYNTLTRQKETFKPLEEGRVKMYVCGPTVYNYIHIGNARSAIAFDTIRRYLEYRGYQVDYVSNFTDVDDKMIKAANAENITVPELADRYITAFKEDTKALNIEPATLNPRATDNIEEIVAFIQDLIAKDYAYAVDGDVYYRARKFKAYGHLAGQDLDQLEQGASEHTATEETLRKEDPIDFALWKAEKGNEIAWESPWGKGRPGWHIECSVMSTKYLGDTIDIHGGGQDLEFPHHENEIAQSEAKTGQTFVNYWLHNGFVTVGDDDQKMSKSLGNFVTVHDLIQEVNPQALRFLMSSTQYRRPIRYSQSLLAEAQTNLDRLKTTLDNLAFRQPTAEPGEDQIVMDKAAELEAAFVTAMDDDFNVQNGLTQLYELAKLSNQYLEQPTVQSDTLTSLATRLTRLLAIFGVVFKADQLLDTEVESLIEERQAARAAKDFAKSDAIRDQLKAQGIILEDTPQGMRWRRA.

Zn(2+) is bound at residue Cys28. Residues 30-40 (PTVYNYIHIGN) carry the 'HIGH' region motif. Positions 212, 237, and 241 each coordinate Zn(2+). The 'KMSKS' region motif lies at 271–275 (KMSKS). Lys274 contributes to the ATP binding site.

It belongs to the class-I aminoacyl-tRNA synthetase family. Monomer. Zn(2+) is required as a cofactor.

The protein localises to the cytoplasm. The enzyme catalyses tRNA(Cys) + L-cysteine + ATP = L-cysteinyl-tRNA(Cys) + AMP + diphosphate. This chain is Cysteine--tRNA ligase, found in Latilactobacillus sakei subsp. sakei (strain 23K) (Lactobacillus sakei subsp. sakei).